The sequence spans 628 residues: Kinesin-like protein KIN-10B (628 aa).

Residues Asn-20–Ile-340 enclose the Kinesin motor domain. An ATP-binding site is contributed by Gly-114–Thr-121. A disordered region spans residues Ser-496–Pro-519. Polar residues predominate over residues Ile-498–Gly-509.

Belongs to the TRAFAC class myosin-kinesin ATPase superfamily. Kinesin family. KIN-10 subfamily.

In Arabidopsis thaliana (Mouse-ear cress), this protein is Kinesin-like protein KIN-10B.